The following is a 382-amino-acid chain: MLEFETNIDGLASIKVIGVGGGGNNAVNRMIENEVQGVEYIAVNTDAQALNLSKAEVKMQIGAKLTRGLGAGANPEVGKKAAEESKEQIEEALKGADMVFVTAGMGGGTGTGAAPVIAQIAKDLGALTVGVVTRPFTFEGRKRQLQAAGGISAMKEAVDTLIVIPNDRILEIVDKNTPMLEAFREADNVLRQGVQGISDLIATPGLINLDFADVKTIMSNKGSALMGIGIATGENRAAEAAKKAISSPLLEAAIDGAQGVLMNITGGTNLSLYEVQEAADIVASASDQDVNMIFGSVINENLKDEIVVTVIATGFIEQEKDVTKPQRPSLNQSIKTHNQSVPKREPKREEPQQQNTVSRHTSQPADDTLDIPTFLRNRNKRG.

Residues 21-25 (GGGNN), 108-110 (GTG), glutamate 139, arginine 143, and aspartate 187 each bind GTP. The interval 320 to 382 (KDVTKPQRPS…TFLRNRNKRG (63 aa)) is disordered. Polar residues predominate over residues 326-341 (QRPSLNQSIKTHNQSV). Over residues 342 to 351 (PKREPKREEP) the composition is skewed to basic and acidic residues. The segment covering 352 to 365 (QQQNTVSRHTSQPA) has biased composition (polar residues).

It belongs to the FtsZ family. In terms of assembly, homodimer. Polymerizes to form a dynamic ring structure in a strictly GTP-dependent manner. Interacts directly with several other division proteins. Interacts with FtsA. Interacts with Phi29 DNA replication protein 1. Interacts with the cell division inhibitor MciZ.

It is found in the cytoplasm. Its activity is regulated as follows. During sporulation, is negatively regulated by MciZ, which binds to FtsZ and inhibits its polymerization and the formation of the Z ring. Functionally, essential cell division protein that forms a contractile ring structure (Z ring) at the future cell division site. The regulation of the ring assembly controls the timing and the location of cell division. One of the functions of the FtsZ ring is to recruit other cell division proteins to the septum to produce a new cell wall between the dividing cells. Binds GTP and shows GTPase activity. This Bacillus subtilis (strain 168) protein is Cell division protein FtsZ.